The sequence spans 120 residues: Large ribosomal subunit protein uL18 (120 aa).

It belongs to the universal ribosomal protein uL18 family. In terms of assembly, part of the 50S ribosomal subunit; part of the 5S rRNA/L5/L18/L25 subcomplex. Contacts the 5S and 23S rRNAs.

This is one of the proteins that bind and probably mediate the attachment of the 5S RNA into the large ribosomal subunit, where it forms part of the central protuberance. This is Large ribosomal subunit protein uL18 from Methylorubrum extorquens (strain CM4 / NCIMB 13688) (Methylobacterium extorquens).